A 167-amino-acid polypeptide reads, in one-letter code: NADH-quinone oxidoreductase subunit B 2 (167 aa).

The [4Fe-4S] cluster site is built by Cys-38, Cys-39, Cys-103, and Cys-132.

The protein belongs to the complex I 20 kDa subunit family. As to quaternary structure, NDH-1 is composed of 14 different subunits. Subunits NuoB, C, D, E, F, and G constitute the peripheral sector of the complex. The cofactor is [4Fe-4S] cluster.

Its subcellular location is the cell inner membrane. The enzyme catalyses a quinone + NADH + 5 H(+)(in) = a quinol + NAD(+) + 4 H(+)(out). In terms of biological role, NDH-1 shuttles electrons from NADH, via FMN and iron-sulfur (Fe-S) centers, to quinones in the respiratory chain. The immediate electron acceptor for the enzyme in this species is believed to be ubiquinone. Couples the redox reaction to proton translocation (for every two electrons transferred, four hydrogen ions are translocated across the cytoplasmic membrane), and thus conserves the redox energy in a proton gradient. The chain is NADH-quinone oxidoreductase subunit B 2 from Rhizobium etli (strain CIAT 652).